Here is a 90-residue protein sequence, read N- to C-terminus: Acylphosphatase (90 aa).

The Acylphosphatase-like domain maps to 3–90; it reads RVLIKLTGKV…DIYLDFSIVR (88 aa). Residues Arg18 and Asn36 contribute to the active site.

Belongs to the acylphosphatase family.

The catalysed reaction is an acyl phosphate + H2O = a carboxylate + phosphate + H(+). This chain is Acylphosphatase (acyP), found in Shewanella oneidensis (strain ATCC 700550 / JCM 31522 / CIP 106686 / LMG 19005 / NCIMB 14063 / MR-1).